A 242-amino-acid chain; its full sequence is N-acetylmuramate alpha-1-phosphate uridylyltransferase (242 aa).

Residues 16–18 (GTR) and Lys-28 each bind UTP. Asn-113 contributes to the substrate binding site. Asp-115 contributes to the Mg(2+) binding site. Asp-158 lines the substrate pocket.

The protein belongs to the nucleotidyltransferase MurU family. Monomer. The cofactor is Mg(2+).

The enzyme catalyses N-acetyl-alpha-D-muramate 1-phosphate + UDP + H(+) = UDP-N-acetyl-alpha-D-muramate + phosphate. It functions in the pathway cell wall biogenesis; peptidoglycan recycling. Functionally, catalyzes the formation of UDP-N-acetylmuramate (UDP-MurNAc), a crucial precursor of the bacterial peptidoglycan cell wall, from UTP and MurNAc-alpha-1P. Is likely involved in peptidoglycan recycling as part of a cell wall recycling pathway that bypasses de novo biosynthesis of the peptidoglycan precursor UDP-MurNAc. Is able to complement the fosfomycin sensitivity phenotype of a P.putida mutant lacking murU. This chain is N-acetylmuramate alpha-1-phosphate uridylyltransferase, found in Caulobacter vibrioides (strain ATCC 19089 / CIP 103742 / CB 15) (Caulobacter crescentus).